Consider the following 365-residue polypeptide: Protein dbl-1 (365 aa).

A signal peptide spans 1 to 42 (MNDSVRTTTTISSTKSLVHSFQLSAILHLFLLISFTPMSAAA). Residues 43–244 (DQHASHATRR…KRSAQTGNSE (202 aa)) constitute a propeptide that is removed on maturation. Residues asparagine 110, asparagine 143, and asparagine 167 are each glycosylated (N-linked (GlcNAc...) asparagine). Positions 231-259 (SVRRKRSAQTGNSERKNRKKGRKHHNTEA) are disordered. Residues 246 to 255 (KNRKKGRKHH) show a composition bias toward basic residues. 3 disulfide bridges follow: cysteine 264/cysteine 330, cysteine 293/cysteine 362, and cysteine 297/cysteine 364. N-linked (GlcNAc...) asparagine glycosylation occurs at asparagine 306.

It belongs to the TGF-beta family. In terms of assembly, homodimer; disulfide-linked. Interacts with drag-1. As to expression, expressed in embryos just prior to hatching and remains constant in most cells throughout the larval and adult stages. Expressed by AVA command interneurons.

It localises to the secreted. Its function is as follows. Ligand for the serine/threonine-protein kinase receptor type-1 sma-6 which activates a TGF-beta-like signaling pathway. Multifunctional protein that is involved in body size, male ectodermal patterning, innate immunity, lipid metabolism and neural plasticity. Dose-dependent regulator of body size, probably influencing the sizes of some or all cells rather than their number. Plays a role in patterning of male-specific genital sensilla (simple sense organs), known as rays, and mating-associated structures, spicules. Plays a protective role in response to infection by the Gram-negative bacterium S.marcescens, by activating expression of genes involved in innate immunity. Regulator of lipid homeostasis, acting non cell-autonomously in the hypodermis; partly dependent on the Insulin/IGF-1-like signaling (IIS) mediated pathway. Required for aversive olfactory learning of pathogenic bacteria in adults. Involved in gland cell morphology, possibly via activation of a Smad-independent TGF-beta signaling pathway. Required to oppose the autoregulation of expression of Runt-related transcription factor rnt-1. This chain is Protein dbl-1, found in Caenorhabditis elegans.